A 252-amino-acid chain; its full sequence is D-aminoacyl-tRNA deacylase (252 aa).

This sequence belongs to the DtdA deacylase family. As to quaternary structure, monomer. It depends on Zn(2+) as a cofactor.

The enzyme catalyses a D-aminoacyl-tRNA + H2O = a tRNA + a D-alpha-amino acid + H(+). The catalysed reaction is glycyl-tRNA(Ala) + H2O = tRNA(Ala) + glycine + H(+). Functionally, D-aminoacyl-tRNA deacylase with broad substrate specificity. By recycling D-aminoacyl-tRNA to D-amino acids and free tRNA molecules, this enzyme counteracts the toxicity associated with the formation of D-aminoacyl-tRNA entities in vivo. The chain is D-aminoacyl-tRNA deacylase from Pyrobaculum arsenaticum (strain DSM 13514 / JCM 11321 / PZ6).